The primary structure comprises 630 residues: Zinc finger protein MSN4 (630 aa).

Position 1 is an N-acetylmethionine (Met-1). Low complexity predominate over residues 37 to 56 (TTNVSATSSNDNSANNSISS). Disordered stretches follow at residues 37 to 77 (TTNV…ATNT) and 115 to 137 (FVNDGEKQSSNANGKKNGGDKIY). The residue at position 178 (Ser-178) is a Phosphoserine. The short motif at 237–245 (SILEDFVSS) is the 9aaTAD element. Ser-263 is subject to Phosphoserine. Positions 292-303 (KNSSNSKPTQQI) are enriched in polar residues. Disordered stretches follow at residues 292–322 (KNSSNSKPTQQIIPEGTATTERRGSTISPTT) and 360–379 (SISSSLNRISHSSSTTRQQR). Residues Ser-316 and Ser-319 each carry the phosphoserine modification. Low complexity predominate over residues 360–373 (SISSSLNRISHSSS). Thr-479 bears the Phosphothreonine mark. The disordered stretch occupies residues 502–566 (TSQAHHAAQH…KSITTIDPNN (65 aa)). The segment covering 504 to 515 (QAHHAAQHHQQQ) has biased composition (low complexity). Composition is skewed to polar residues over residues 516 to 525 (PTKQATVSPN) and 532 to 547 (SSVTLSPTISHNNNNG). Residue Ser-558 is modified to Phosphoserine. 2 C2H2-type zinc fingers span residues 573 to 596 (FKCKDCEKAFRRSEHLKRHIRSVH) and 602 to 624 (FACMFCEKKFSRSDNLSQHLKTH).

Its subcellular location is the cytoplasm. It localises to the nucleus. Its function is as follows. Positive transcriptional factor that acts as a component of the stress responsive system. Recognizes and binds to the stress response element (STRE) which is involved in the response to various forms of stress (heat, oxidative, osmotic, etc.). Involved in the regulation of the CTT1, DDR2, HSP12 genes. The protein is Zinc finger protein MSN4 (MSN4) of Saccharomyces cerevisiae (strain ATCC 204508 / S288c) (Baker's yeast).